The sequence spans 255 residues: Small ribosomal subunit protein uS2 (255 aa).

A disordered region spans residues 230–255 (QSSSGRDLGASSEVPVEPALEEAAEG).

The protein belongs to the universal ribosomal protein uS2 family.

This chain is Small ribosomal subunit protein uS2, found in Rhizobium leguminosarum bv. trifolii (strain WSM2304).